The following is a 107-amino-acid chain: UPF0122 protein BLi01817/BL02321 (107 aa).

The protein belongs to the UPF0122 family.

In terms of biological role, might take part in the signal recognition particle (SRP) pathway. This is inferred from the conservation of its genetic proximity to ftsY/ffh. May be a regulatory protein. This chain is UPF0122 protein BLi01817/BL02321, found in Bacillus licheniformis (strain ATCC 14580 / DSM 13 / JCM 2505 / CCUG 7422 / NBRC 12200 / NCIMB 9375 / NCTC 10341 / NRRL NRS-1264 / Gibson 46).